The chain runs to 60 residues: Metallothionein B (60 aa).

The interval 1 to 28 (MDPCECTKSGTCNCGGSCTCTNCSCTSC) is beta. 20 residues coordinate a divalent metal cation: Cys4, Cys6, Cys12, Cys14, Cys18, Cys20, Cys23, Cys25, Cys28, Cys32, Cys33, Cys35, Cys36, Cys40, Cys43, Cys47, Cys49, Cys54, Cys58, and Cys59. The tract at residues 29-60 (KKSCCPCCPSGCTKCASGCVCKGKTCDTSCCQ) is alpha.

It belongs to the metallothionein superfamily. Type 1 family.

Its function is as follows. Metallothioneins have a high content of cysteine residues that bind various heavy metals. The protein is Metallothionein B (mtb) of Chaenocephalus aceratus (Blackfin icefish).